A 412-amino-acid polypeptide reads, in one-letter code: Argininosuccinate synthase (412 aa).

ATP is bound by residues 15-23 (AYSGGLDTS) and Ala-42. L-citrulline-binding residues include Tyr-93 and Ser-98. Gly-123 contacts ATP. Positions 125, 129, and 130 each coordinate L-aspartate. An L-citrulline-binding site is contributed by Asn-129. L-citrulline contacts are provided by Arg-133, Ser-185, Ser-194, Glu-270, and Tyr-282.

It belongs to the argininosuccinate synthase family. Type 1 subfamily. In terms of assembly, homotetramer.

The protein localises to the cytoplasm. It catalyses the reaction L-citrulline + L-aspartate + ATP = 2-(N(omega)-L-arginino)succinate + AMP + diphosphate + H(+). The protein operates within amino-acid biosynthesis; L-arginine biosynthesis; L-arginine from L-ornithine and carbamoyl phosphate: step 2/3. The chain is Argininosuccinate synthase from Psychrobacter arcticus (strain DSM 17307 / VKM B-2377 / 273-4).